The sequence spans 281 residues: NADPH-dependent 7-cyano-7-deazaguanine reductase (281 aa).

88 to 90 provides a ligand contact to substrate; the sequence is IES. Position 90–91 (90–91) interacts with NADPH; that stretch reads SK. C189 (thioimide intermediate) is an active-site residue. The Proton donor role is filled by D196. Substrate is bound at residue 228 to 229; the sequence is HE. 257 to 258 contacts NADPH; it reads RG.

The protein belongs to the GTP cyclohydrolase I family. QueF type 2 subfamily. Homodimer.

It localises to the cytoplasm. The catalysed reaction is 7-aminomethyl-7-carbaguanine + 2 NADP(+) = 7-cyano-7-deazaguanine + 2 NADPH + 3 H(+). It functions in the pathway tRNA modification; tRNA-queuosine biosynthesis. Catalyzes the NADPH-dependent reduction of 7-cyano-7-deazaguanine (preQ0) to 7-aminomethyl-7-deazaguanine (preQ1). The sequence is that of NADPH-dependent 7-cyano-7-deazaguanine reductase from Yersinia pestis bv. Antiqua (strain Antiqua).